The chain runs to 230 residues: Protein-L-isoaspartate O-methyltransferase 1 (230 aa).

Serine 65 is an active-site residue.

The protein belongs to the methyltransferase superfamily. L-isoaspartyl/D-aspartyl protein methyltransferase family. Monomer. Expressed in roots, rosette leaves, stems, cauline leaves, flowers and developing seeds.

The protein resides in the cytoplasm. The catalysed reaction is [protein]-L-isoaspartate + S-adenosyl-L-methionine = [protein]-L-isoaspartate alpha-methyl ester + S-adenosyl-L-homocysteine. Catalyzes the methyl esterification of L-isoaspartyl residues in peptides and proteins that result from spontaneous decomposition of normal L-aspartyl and L-asparaginyl residues. It plays a role in the repair and/or degradation of damaged proteins. Contributes to seed longevity and germination vigor by limiting the abnormal accumulation of the L-isoaspartyl residues in seed proteins. The sequence is that of Protein-L-isoaspartate O-methyltransferase 1 (PIMT1) from Arabidopsis thaliana (Mouse-ear cress).